A 146-amino-acid chain; its full sequence is Basic phospholipase A2 (146 aa).

The signal sequence occupies residues 1–21 (MNPAHLLVLAAVCVSLLGASS). Positions 22–27 (VPPRPL) are excised as a propeptide. Disulfide bonds link cysteine 38–cysteine 97, cysteine 52–cysteine 145, cysteine 54–cysteine 70, cysteine 69–cysteine 127, cysteine 76–cysteine 120, cysteine 86–cysteine 113, and cysteine 106–cysteine 118. The Ca(2+) site is built by tyrosine 53, glycine 55, and glycine 57. Histidine 73 is a catalytic residue. Aspartate 74 lines the Ca(2+) pocket. The N-linked (GlcNAc...) asparagine glycan is linked to asparagine 109. Residue aspartate 121 is part of the active site.

It belongs to the phospholipase A2 family. Group I subfamily. D49 sub-subfamily. Requires Ca(2+) as cofactor. As to expression, expressed by the venom gland.

The protein resides in the secreted. It carries out the reaction a 1,2-diacyl-sn-glycero-3-phosphocholine + H2O = a 1-acyl-sn-glycero-3-phosphocholine + a fatty acid + H(+). Functionally, PLA2 catalyzes the calcium-dependent hydrolysis of the 2-acyl groups in 3-sn-phosphoglycerides. The sequence is that of Basic phospholipase A2 from Micrurus corallinus (Brazilian coral snake).